Consider the following 227-residue polypeptide: Endonuclease V (227 aa).

2 residues coordinate Mg(2+): aspartate 46 and aspartate 114.

It belongs to the endonuclease V family. Requires Mg(2+) as cofactor.

The protein localises to the cytoplasm. The enzyme catalyses Endonucleolytic cleavage at apurinic or apyrimidinic sites to products with a 5'-phosphate.. Its function is as follows. DNA repair enzyme involved in the repair of deaminated bases. Selectively cleaves double-stranded DNA at the second phosphodiester bond 3' to a deoxyinosine leaving behind the intact lesion on the nicked DNA. This chain is Endonuclease V, found in Alkalilimnicola ehrlichii (strain ATCC BAA-1101 / DSM 17681 / MLHE-1).